Consider the following 148-residue polypeptide: Hemoglobin subunit beta-2 (148 aa).

One can recognise a Globin domain in the interval 3–148 (EWTDAERTAI…VVSALCRQYH (146 aa)). Residues His-64 and His-93 each contribute to the heme b site.

As to quaternary structure, heterotetramer of two alpha chains and two beta chains. In terms of tissue distribution, red blood cells.

Its function is as follows. Involved in oxygen transport from gills to the various peripheral tissues. This Danio rerio (Zebrafish) protein is Hemoglobin subunit beta-2 (ba2).